The primary structure comprises 161 residues: Phosphopantetheine adenylyltransferase (161 aa).

Serine 9 serves as a coordination point for substrate. ATP is bound by residues 9–10 (SF) and histidine 17. Residues lysine 41, threonine 73, and arginine 87 each contribute to the substrate site. Residues 88-90 (GLR), glutamate 98, and 123-129 (FAHISST) each bind ATP.

Belongs to the bacterial CoaD family. Homohexamer. Mg(2+) is required as a cofactor.

The protein resides in the cytoplasm. It catalyses the reaction (R)-4'-phosphopantetheine + ATP + H(+) = 3'-dephospho-CoA + diphosphate. The protein operates within cofactor biosynthesis; coenzyme A biosynthesis; CoA from (R)-pantothenate: step 4/5. Functionally, reversibly transfers an adenylyl group from ATP to 4'-phosphopantetheine, yielding dephospho-CoA (dPCoA) and pyrophosphate. This chain is Phosphopantetheine adenylyltransferase, found in Chloroflexus aurantiacus (strain ATCC 29366 / DSM 635 / J-10-fl).